A 297-amino-acid polypeptide reads, in one-letter code: 3-methyl-2-oxobutanoate hydroxymethyltransferase (297 aa).

Polar residues predominate over residues 1–12 (MSEQISEQSEQN). Residues 1 to 36 (MSEQISEQSEQNVYGACPPVPAGESSPSAASAPRTK) are disordered. Low complexity predominate over residues 22-33 (AGESSPSAASAP). Mg(2+) contacts are provided by Asp78 and Asp117. Residues 78 to 79 (DS), Asp117, and Lys147 each bind 3-methyl-2-oxobutanoate. Glu149 provides a ligand contact to Mg(2+). The active-site Proton acceptor is the Glu215.

Belongs to the PanB family. In terms of assembly, homodecamer; pentamer of dimers. Mg(2+) is required as a cofactor.

The protein resides in the cytoplasm. The catalysed reaction is 3-methyl-2-oxobutanoate + (6R)-5,10-methylene-5,6,7,8-tetrahydrofolate + H2O = 2-dehydropantoate + (6S)-5,6,7,8-tetrahydrofolate. It participates in cofactor biosynthesis; (R)-pantothenate biosynthesis; (R)-pantoate from 3-methyl-2-oxobutanoate: step 1/2. In terms of biological role, catalyzes the reversible reaction in which hydroxymethyl group from 5,10-methylenetetrahydrofolate is transferred onto alpha-ketoisovalerate to form ketopantoate. This chain is 3-methyl-2-oxobutanoate hydroxymethyltransferase, found in Mycobacterium ulcerans (strain Agy99).